Consider the following 268-residue polypeptide: Imidazole glycerol phosphate synthase subunit HisF (268 aa).

Residues aspartate 12 and aspartate 131 contribute to the active site.

The protein belongs to the HisA/HisF family. Heterodimer of HisH and HisF.

The protein resides in the cytoplasm. The enzyme catalyses 5-[(5-phospho-1-deoxy-D-ribulos-1-ylimino)methylamino]-1-(5-phospho-beta-D-ribosyl)imidazole-4-carboxamide + L-glutamine = D-erythro-1-(imidazol-4-yl)glycerol 3-phosphate + 5-amino-1-(5-phospho-beta-D-ribosyl)imidazole-4-carboxamide + L-glutamate + H(+). It functions in the pathway amino-acid biosynthesis; L-histidine biosynthesis; L-histidine from 5-phospho-alpha-D-ribose 1-diphosphate: step 5/9. In terms of biological role, IGPS catalyzes the conversion of PRFAR and glutamine to IGP, AICAR and glutamate. The HisF subunit catalyzes the cyclization activity that produces IGP and AICAR from PRFAR using the ammonia provided by the HisH subunit. This Methanocorpusculum labreanum (strain ATCC 43576 / DSM 4855 / Z) protein is Imidazole glycerol phosphate synthase subunit HisF.